We begin with the raw amino-acid sequence, 221 residues long: Cytidylate kinase (221 aa).

11–19 (GPTASGKGT) contributes to the ATP binding site.

The protein belongs to the cytidylate kinase family. Type 1 subfamily.

The protein resides in the cytoplasm. It catalyses the reaction CMP + ATP = CDP + ADP. It carries out the reaction dCMP + ATP = dCDP + ADP. In Cupriavidus pinatubonensis (strain JMP 134 / LMG 1197) (Cupriavidus necator (strain JMP 134)), this protein is Cytidylate kinase.